A 119-amino-acid polypeptide reads, in one-letter code: Large ribosomal subunit protein bL20 (119 aa).

The protein belongs to the bacterial ribosomal protein bL20 family.

Binds directly to 23S ribosomal RNA and is necessary for the in vitro assembly process of the 50S ribosomal subunit. It is not involved in the protein synthesizing functions of that subunit. This is Large ribosomal subunit protein bL20 from Streptococcus mutans serotype c (strain ATCC 700610 / UA159).